We begin with the raw amino-acid sequence, 206 residues long: Outer-membrane lipoprotein LolB (206 aa).

The N-terminal stretch at 1 to 21 (MHERNYAVFRLLPLASLLLAA) is a signal peptide. Cys-22 carries N-palmitoyl cysteine lipidation. The S-diacylglycerol cysteine moiety is linked to residue Cys-22.

Belongs to the LolB family. In terms of assembly, monomer.

It is found in the cell outer membrane. Plays a critical role in the incorporation of lipoproteins in the outer membrane after they are released by the LolA protein. This Sodalis glossinidius (strain morsitans) protein is Outer-membrane lipoprotein LolB.